The chain runs to 29 residues: NAD-reducing hydrogenase HoxS subunit delta (29 aa).

Residues 1–11 show a composition bias toward basic and acidic residues; that stretch reads MKHSEKNEIAS. The tract at residues 1 to 29 is disordered; it reads MKHSEKNEIASHELPTTPLDPVLAAGRES.

This sequence belongs to the [NiFe]/[NiFeSe] hydrogenase small subunit family. Tetramer of an alpha and a gamma subunits (flavin-containing dimer), and a delta and a nickel-containing beta subunits (hydrogenase dimer). [4Fe-4S] cluster serves as cofactor. The cofactor is [3Fe-4S] cluster. [2Fe-2S] cluster is required as a cofactor. It depends on FMN as a cofactor. Requires Ni(2+) as cofactor.

The protein localises to the cytoplasm. The catalysed reaction is H2 + NAD(+) = NADH + H(+). The polypeptide is NAD-reducing hydrogenase HoxS subunit delta (hoxY) (Rhodococcus opacus (Nocardia opaca)).